The primary structure comprises 118 residues: Histone H4 (118 aa).

Positions 1-39 are disordered; sequence MATDTGSGRGKGGKGVTLGKGSKGAKASKGGKRIRTKTQ. Residues 7–22 show a composition bias toward gly residues; that stretch reads SGRGKGGKGVTLGKGS.

It belongs to the histone H4 family. In terms of assembly, the nucleosome is a histone octamer containing two molecules each of H2A, H2B, H3 and H4 assembled in one H3-H4 heterotetramer and two H2A-H2B heterodimers. The octamer wraps approximately 147 bp of DNA.

The protein localises to the nucleus. The protein resides in the chromosome. In terms of biological role, core component of nucleosome. Nucleosomes wrap and compact DNA into chromatin, limiting DNA accessibility to the cellular machineries which require DNA as a template. Histones thereby play a central role in transcription regulation, DNA repair, DNA replication and chromosomal stability. DNA accessibility is regulated via a complex set of post-translational modifications of histones, also called histone code, and nucleosome remodeling. This Entamoeba histolytica (strain ATCC 30459 / HM-1:IMSS / ABRM) protein is Histone H4.